A 277-amino-acid polypeptide reads, in one-letter code: 4-hydroxy-tetrahydrodipicolinate reductase (277 aa).

Residues 10–15 and glutamate 36 contribute to the NAD(+) site; that span reads GAGGRM. An NADP(+)-binding site is contributed by arginine 37. NAD(+) contacts are provided by residues 100–102 and 124–127; these read GTT and SGNM. The active-site Proton donor/acceptor is the histidine 158. Residue histidine 159 participates in (S)-2,3,4,5-tetrahydrodipicolinate binding. Lysine 162 serves as the catalytic Proton donor. 168–169 serves as a coordination point for (S)-2,3,4,5-tetrahydrodipicolinate; sequence GT.

Belongs to the DapB family.

The protein resides in the cytoplasm. The enzyme catalyses (S)-2,3,4,5-tetrahydrodipicolinate + NAD(+) + H2O = (2S,4S)-4-hydroxy-2,3,4,5-tetrahydrodipicolinate + NADH + H(+). The catalysed reaction is (S)-2,3,4,5-tetrahydrodipicolinate + NADP(+) + H2O = (2S,4S)-4-hydroxy-2,3,4,5-tetrahydrodipicolinate + NADPH + H(+). It functions in the pathway amino-acid biosynthesis; L-lysine biosynthesis via DAP pathway; (S)-tetrahydrodipicolinate from L-aspartate: step 4/4. Functionally, catalyzes the conversion of 4-hydroxy-tetrahydrodipicolinate (HTPA) to tetrahydrodipicolinate. The polypeptide is 4-hydroxy-tetrahydrodipicolinate reductase (Chelativorans sp. (strain BNC1)).